The following is a 435-amino-acid chain: Mitochondrial association factor 1 form a1 (435 aa).

Residues 1–20 (MWRIWRCRLSFLFATGCLLG) form the signal peptide. Over 21-95 (ALTAGLGSQM…SVTARRRRNR (75 aa)) the chain is Vacuolar. The tract at residues 43-88 (GVADASQEAGDVVEERTERTEEQVFAPGPPRRHSSESLFPRNASVT) is disordered. The segment covering 55–64 (VEERTERTEE) has biased composition (basic and acidic residues). Residues 96 to 116 (RIAPIATAVGVAVILAALYVL) traverse the membrane as a helical segment. The Cytoplasmic segment spans residues 117 to 435 (RRRRAQPPQE…ERKYKFPQGD (319 aa)). The segment at 120 to 162 (RAQPPQEPEPPTRLRTPRPRAPSEQQQPSESEPPAEVPMTPDP) is disordered. The segment covering 141-153 (PSEQQQPSESEPP) has biased composition (low complexity).

Interacts with host SAMM50.

Its subcellular location is the parasitophorous vacuole membrane. Functionally, during host cell infection by tachyzoites, does not play a role in tethering the parasitophorous vacuole to the host mitochondria, probably because it does not bind host mitochondrial import protein TOMM70. The sequence is that of Mitochondrial association factor 1 form a1 from Toxoplasma gondii.